We begin with the raw amino-acid sequence, 695 residues long: D-(-)-3-hydroxybutyrate oligomer hydrolase (695 aa).

An N-terminal signal peptide occupies residues 1-17 (MTTHGWGTRILLGAALA). The active-site Charge relay system is serine 308.

The protein belongs to the D-(-)-3-hydroxybutyrate oligomer hydrolase family.

Its subcellular location is the secreted. The catalysed reaction is (3R)-hydroxybutanoate dimer + H2O = 2 (R)-3-hydroxybutanoate + H(+). Its pathway is lipid metabolism; butanoate metabolism. Functionally, participates in the degradation of poly-3-hydroxybutyrate (PHB). It works downstream of poly(3-hydroxybutyrate) depolymerase, hydrolyzing D(-)-3-hydroxybutyrate oligomers of various length (3HB-oligomers) into 3HB-monomers. The chain is D-(-)-3-hydroxybutyrate oligomer hydrolase from Burkholderia ambifaria (strain ATCC BAA-244 / DSM 16087 / CCUG 44356 / LMG 19182 / AMMD) (Burkholderia cepacia (strain AMMD)).